A 724-amino-acid polypeptide reads, in one-letter code: Protein Aster-A (724 aa).

Residues 1 to 18 show a composition bias toward low complexity; sequence MFDTTPHSGRSTPSSSPS. Positions 1 to 66 are disordered; that stretch reads MFDTTPHSGR…TPSTQSLGSR (66 aa). A compositionally biased stretch (polar residues) spans 57–66; that stretch reads TPSTQSLGSR. In terms of domain architecture, GRAM spans 91–158; it reads EDFRKLFSKL…KEVTCLKKEK (68 aa). The interval 256-336 is disordered; the sequence is SSGAADRSQE…GPTTLGPLDL (81 aa). Phosphoserine is present on residues Ser-263, Ser-267, and Ser-271. Polar residues predominate over residues 300–312; it reads DSQPDASSSQTVT. Low complexity predominate over residues 326 to 336; it reads DGPTTLGPLDL. The 172-residue stretch at 367 to 538 folds into the VASt domain; it reads SGRLLINSVF…ELAKAEKLSL (172 aa). A Phosphoserine modification is found at Ser-415. The tract at residues 560-579 is disordered; sequence SWRAHGDGPQHPDPDPCARA. A compositionally biased stretch (basic and acidic residues) spans 563-575; that stretch reads AHGDGPQHPDPDP. A helical transmembrane segment spans residues 610 to 630; sequence LISIVICVSLIILIALNVLLF.

In terms of tissue distribution, expressed in liver.

It is found in the endoplasmic reticulum membrane. It localises to the cell membrane. The protein resides in the cytoplasmic vesicle. Its subcellular location is the autophagosome. Its function is as follows. Cholesterol transporter that mediates non-vesicular transport of cholesterol from the plasma membrane (PM) to the endoplasmic reticulum (ER). Contains unique domains for binding cholesterol and the PM, thereby serving as a molecular bridge for the transfer of cholesterol from the PM to the ER. Plays a crucial role in cholesterol homeostasis and has the unique ability to localize to the PM based on the level of membrane cholesterol. In lipid-poor conditions localizes to the ER membrane and in response to excess cholesterol in the PM is recruited to the endoplasmic reticulum-plasma membrane contact sites (EPCS) which is mediated by the GRAM domain. At the EPCS, the sterol-binding VASt/ASTER domain binds to the cholesterol in the PM and facilitates its transfer from the PM to ER. May play a role in tumor progression. Plays a role in autophagy regulation and is required for biogenesis of the autophagosome. This function in autophagy requires its cholesterol-transfer activity. The chain is Protein Aster-A from Homo sapiens (Human).